We begin with the raw amino-acid sequence, 243 residues long: Phosphate-specific transport system accessory protein PhoU (243 aa).

It belongs to the PhoU family. Homodimer. Interacts with phosphate regulon transcriptional regulatory protein PhoB and ferric uptake regulation protein Fur.

The protein resides in the cytoplasm. Part of the phosphate (Pho) regulon, which plays a key role in phosphate homeostasis. Encoded together with proteins of the phosphate-specific transport (Pst) system in the polycistronic pstSCAB-phoU operon. PhoU is essential for the repression of the Pho regulon at high phosphate conditions. In this role, it may bind, possibly as a chaperone, to PhoR, PhoB or a PhoR-PhoB complex to promote dephosphorylation of phospho-PhoB, or inhibit formation of the PhoR-PhoB transitory complex. This chain is Phosphate-specific transport system accessory protein PhoU, found in Edwardsiella tarda.